The chain runs to 1453 residues: Collagen alpha-1(I) chain (1453 aa).

The first 22 residues, 1–22, serve as a signal peptide directing secretion; the sequence is MFSFVDLRLLLLLGATALLTHG. The propeptide at 23 to 151 is N-terminal propeptide; it reads QEDIPEVSCI…PPGLGGNFAS (129 aa). In terms of domain architecture, VWFC spans 29 to 87; sequence VSCIHNGLRVPNGETWKPDVCLICICHNGTAVCDGVLCKEDLDCPNPQKREGECCPFCP. N-linked (GlcNAc...) asparagine glycosylation is present at asparagine 56. Positions 97–1206 are disordered; it reads VIGVEGPKGD…KSQDGGRYYR (1110 aa). Composition is skewed to pro residues over residues 109 to 118 and 128 to 143; these read PQGPRGPVGP and PGLPGPPGPPGPPGPP. Pyrrolidone carboxylic acid is present on glutamine 152. Positions 152-167 are nonhelical region (N-terminal); sequence QMSYGYDEKSAGVSVP. Residue lysine 160 is modified to Allysine. Residue serine 161 is modified to Phosphoserine. Positions 168-1181 are triple-helical region; sequence GPMGPSGPRG…PGPPGPPGPP (1014 aa). A 4-hydroxyproline mark is found at proline 179, proline 182, proline 185, proline 194, proline 197, proline 200, proline 215, proline 230, proline 236, proline 245, and proline 251. Over residues 187–206 the composition is skewed to low complexity; the sequence is PQGFQGPPGEPGEPGASGPM. Over residues 218–232 the composition is skewed to basic and acidic residues; the sequence is NGDDGEAGKPGRPGE. Lysine 254 is subject to 5-hydroxylysine; alternate. O-linked (Gal...) hydroxylysine; alternate glycosylation occurs at lysine 254. Position 260 is a phosphoserine (serine 260). A 4-hydroxyproline mark is found at proline 278, proline 281, proline 287, proline 296, and proline 302. Positions 307–320 are enriched in low complexity; it reads SAGARGNDGAVGAA. Residues 322–334 show a composition bias toward pro residues; the sequence is PPGPTGPTGPPGF. 11 positions are modified to 4-hydroxyproline: proline 323, proline 332, proline 335, proline 362, proline 365, proline 377, proline 383, proline 392, proline 398, proline 401, and proline 416. Low complexity predominate over residues 335–361; it reads PGAAGAKGEAGPQGARGSEGPQGVRGE. Positions 368–418 are enriched in low complexity; sequence AGAAGPAGNPGADGQPGAKGANGAPGIAGAPGFPGARGPSGPQGPSGAPGP. A 5-hydroxylysine modification is found at lysine 419. 4-hydroxyproline is present on residues proline 425, proline 428, proline 440, proline 449, proline 464, proline 470, proline 479, and proline 485. Gly residues predominate over residues 474–483; sequence GERGGPGSRG. Lysine 494 carries the post-translational modification 5-hydroxylysine. Proline 503, proline 512, proline 518, proline 524, proline 533, proline 536, proline 545, proline 554, proline 560, proline 572, proline 581, proline 590, proline 593, proline 611, proline 629, proline 635, proline 641, proline 647, proline 653, proline 659, proline 671, proline 680, proline 692, proline 704, proline 707, proline 713, proline 719, and proline 728 each carry 4-hydroxyproline. Residues 527 to 566 show a composition bias toward low complexity; sequence KGLTGSPGSPGPDGKTGPPGPAGQDGRPGPAGPPGARGQA. Over residues 623 to 650 the composition is skewed to low complexity; it reads QGPAGSPGFQGLPGPAGPPGEAGKPGEQ. 2 stretches are compositionally biased toward low complexity: residues 685–695 and 703–716; these read PRGNNGAPGND and APGAPGSQGAPGLQ. Residues 734 to 736 carry the Cell attachment site motif; sequence RGD. The residue at position 740 (lysine 740) is a 5-hydroxylysine. 3 positions are modified to 4-hydroxyproline: proline 746, proline 761, and proline 767. Low complexity predominate over residues 773–787; that stretch reads TGPSGPAGPTGARGA. At serine 776 the chain carries Phosphoserine. 4-hydroxyproline is present on residues proline 788, proline 794, proline 797, proline 806, proline 812, proline 830, proline 839, and proline 848. Over residues 800 to 815 the composition is skewed to low complexity; sequence AGFAGPPGADGQPGAK. A compositionally biased stretch (pro residues) spans 829 to 841; the sequence is PPGPAGPAGPPGP. The segment covering 842-872 has biased composition (low complexity); sequence IGNVGAPGPKGSRGAAGPPGATGFPGAAGRV. Lysine 851 is subject to 5-hydroxylysine. 4-hydroxyproline occurs at positions 860 and 866. At proline 874 the chain carries 3-hydroxyproline. 4-hydroxyproline occurs at positions 875, 884, 887, 908, 917, 926, 935, 953, 962, 965, 971, 986, 992, 998, 1007, and 1013. Over residues 901-910 the composition is skewed to low complexity; it reads ETGPAGRPGE. Over residues 920–935 the composition is skewed to low complexity; it reads AGEKGSPGADGPAGSP. Pro residues predominate over residues 985 to 995; it reads PPGPMGPPGLA. The span at 997–1012 shows a compositional bias: low complexity; that stretch reads PPGESGREGSPGAEGS. Lysine 1022 carries the 5-hydroxylysine modification. A compositionally biased stretch (pro residues) spans 1031-1046; sequence AGPPGAPGAPGAPGPV. Proline 1034, proline 1037, and proline 1040 each carry 4-hydroxyproline. A compositionally biased stretch (low complexity) spans 1067-1081; sequence IGPAGARGPAGPQGP. The Cell attachment site motif lies at 1082-1084; sequence RGD. Positions 1082-1096 are enriched in basic and acidic residues; sequence RGDKGETGEQGDRGI. A 5-hydroxylysine modification is found at lysine 1085. Residue lysine 1097 is modified to 5-hydroxylysine; alternate. Lysine 1097 is a glycosylation site (O-linked (Gal...) hydroxylysine; alternate). Over residues 1102–1148 the composition is skewed to low complexity; sequence FSGLQGPPGSPGSPGEQGPSGASGPAGPRGPPGSAGSPGKDGLNGLP. 4-hydroxyproline occurs at positions 1109, 1112, 1115, 1133, and 1148. Position 1153 is a 3-hydroxyproline (proline 1153). Position 1154 is a 4-hydroxyproline (proline 1154). A compositionally biased stretch (pro residues) spans 1166–1181; the sequence is AGPPGPPGPPGPPGPP. Proline 1168 is modified (3-hydroxyproline). Proline 1169 is modified (4-hydroxyproline). The residue at position 1171 (proline 1171) is a 3-hydroxyproline. The residue at position 1172 (proline 1172) is a 4-hydroxyproline. Proline 1174 carries the 3-hydroxyproline modification. 4-hydroxyproline is present on residues proline 1175, proline 1178, and proline 1181. Positions 1176 to 1186 are major antigenic determinant (of neutral salt-extracted rat skin collagen); the sequence is GPPGPPSGGYD. The segment at 1182 to 1207 is nonhelical region (C-terminal); sequence SGGYDFSFLPQPPQEKSQDGGRYYRA. An Allysine modification is found at lysine 1197. Positions 1197–1206 are enriched in basic and acidic residues; it reads KSQDGGRYYR. Positions 1208–1453 are cleaved as a propeptide — C-terminal propeptide; it reads DDANVVRDRD…GMDIGPACFV (246 aa). In terms of domain architecture, Fibrillar collagen NC1 spans 1218–1453; that stretch reads LEVDTTLKSL…GMDIGPACFV (236 aa). 3 cysteine pairs are disulfide-bonded: cysteine 1248–cysteine 1280, cysteine 1288–cysteine 1451, and cysteine 1359–cysteine 1404. Ca(2+) contacts are provided by aspartate 1266, asparagine 1268, glutamine 1269, cysteine 1271, and aspartate 1274. An N-linked (GlcNAc...) asparagine glycan is attached at asparagine 1354.

Belongs to the fibrillar collagen family. Trimers of one alpha 2(I) and two alpha 1(I) chains. Interacts with MRC2. Interacts with TRAM2. Interacts with MFAP4 in a Ca (2+)-dependent manner. Contains mostly 4-hydroxyproline. Proline residues at the third position of the tripeptide repeating unit (G-X-Y) are hydroxylated in some or all of the chains. Post-translationally, contains 3-hydroxyproline at a few sites. This modification occurs on the first proline residue in the sequence motif Gly-Pro-Hyp, where Hyp is 4-hydroxyproline. In terms of processing, lysine residues at the third position of the tripeptide repeating unit (G-X-Y) are 5-hydroxylated in some or all of the chains. O-glycosylated on hydroxylated lysine residues. The O-linked glycan consists of a Glc-Gal disaccharide. As to expression, forms the fibrils of tendon, ligaments and bones. In bones the fibrils are mineralized with calcium hydroxyapatite.

Its subcellular location is the secreted. The protein localises to the extracellular space. It is found in the extracellular matrix. Its function is as follows. Type I collagen is a member of group I collagen (fibrillar forming collagen). This is Collagen alpha-1(I) chain (Col1a1) from Rattus norvegicus (Rat).